A 314-amino-acid chain; its full sequence is tRNA pseudouridine synthase B (314 aa).

His43 is a substrate binding site. Asp48 functions as the Nucleophile in the catalytic mechanism. Substrate contacts are provided by Tyr76, Tyr179, and Leu200.

Belongs to the pseudouridine synthase TruB family. Type 1 subfamily.

The enzyme catalyses uridine(55) in tRNA = pseudouridine(55) in tRNA. Responsible for synthesis of pseudouridine from uracil-55 in the psi GC loop of transfer RNAs. The sequence is that of tRNA pseudouridine synthase B from Escherichia coli O139:H28 (strain E24377A / ETEC).